Reading from the N-terminus, the 630-residue chain is Heat shock cognate 70 kDa protein 3 (630 aa).

Residues 611–630 are disordered; it reads FYQGNNNPKPTTTTFNQDLD. Residues 615–630 are compositionally biased toward low complexity; it reads NNNPKPTTTTFNQDLD.

The protein belongs to the heat shock protein 70 family.

Functionally, may function in protein folding and assembly, and disassembly of protein complexes. In Dictyostelium discoideum (Social amoeba), this protein is Heat shock cognate 70 kDa protein 3.